Consider the following 277-residue polypeptide: 2-dehydro-3-deoxyphosphooctonate aldolase (277 aa).

Belongs to the KdsA family.

The protein localises to the cytoplasm. The enzyme catalyses D-arabinose 5-phosphate + phosphoenolpyruvate + H2O = 3-deoxy-alpha-D-manno-2-octulosonate-8-phosphate + phosphate. The protein operates within carbohydrate biosynthesis; 3-deoxy-D-manno-octulosonate biosynthesis; 3-deoxy-D-manno-octulosonate from D-ribulose 5-phosphate: step 2/3. It functions in the pathway bacterial outer membrane biogenesis; lipopolysaccharide biosynthesis. The sequence is that of 2-dehydro-3-deoxyphosphooctonate aldolase from Brucella anthropi (strain ATCC 49188 / DSM 6882 / CCUG 24695 / JCM 21032 / LMG 3331 / NBRC 15819 / NCTC 12168 / Alc 37) (Ochrobactrum anthropi).